The chain runs to 324 residues: Glutathione synthetase (324 aa).

The 188-residue stretch at 125-312 folds into the ATP-grasp domain; that stretch reads EKLFTTTHFP…ISTIILDNLE (188 aa). 152 to 209 contributes to the ATP binding site; that stretch reads FIKTYKDIIIKPLHGMAGLSIFRIKEHDPNTSVIIETMTKYETIPCISQNYITDIQKG. Positions 283 and 285 each coordinate Mg(2+).

Belongs to the prokaryotic GSH synthase family. Mg(2+) serves as cofactor. It depends on Mn(2+) as a cofactor.

It catalyses the reaction gamma-L-glutamyl-L-cysteine + glycine + ATP = glutathione + ADP + phosphate + H(+). It functions in the pathway sulfur metabolism; glutathione biosynthesis; glutathione from L-cysteine and L-glutamate: step 2/2. The chain is Glutathione synthetase from Buchnera aphidicola subsp. Baizongia pistaciae (strain Bp).